We begin with the raw amino-acid sequence, 142 residues long: Small ribosomal subunit protein uS12 (142 aa).

The protein belongs to the universal ribosomal protein uS12 family. Part of the 30S ribosomal subunit.

Functionally, with S4 and S5 plays an important role in translational accuracy. Located at the interface of the 30S and 50S subunits. The chain is Small ribosomal subunit protein uS12 from Thermoplasma acidophilum (strain ATCC 25905 / DSM 1728 / JCM 9062 / NBRC 15155 / AMRC-C165).